The primary structure comprises 338 residues: Activator of 90 kDa heat shock protein ATPase homolog 1 (338 aa).

N6-acetyllysine is present on K3. K182 participates in a covalent cross-link: Glycyl lysine isopeptide (Lys-Gly) (interchain with G-Cter in SUMO1). At S193 the chain carries Phosphoserine. Residue K203 forms a Glycyl lysine isopeptide (Lys-Gly) (interchain with G-Cter in SUMO2) linkage. K212 carries the N6-acetyllysine modification. Y223 carries the phosphotyrosine; by ABL modification.

This sequence belongs to the AHA1 family. In terms of assembly, interacts with HSPCA/HSP90. Interacts with HSP90AA1; the interaction activates HSP90AA1 ATPase activity. Interacts with HSP90AB1. Interacts with GCH1. Interacts with SRPK1. Interacts with FLCN. Phosphorylation at Tyr-223 enhances binding to chaperone HSP90AA1.

It localises to the cytoplasm. Its subcellular location is the cytosol. The protein localises to the endoplasmic reticulum. Its function is as follows. Acts as a co-chaperone of HSP90AA1. Activates the ATPase activity of HSP90AA1 leading to increase in its chaperone activity. Competes with the inhibitory co-chaperone FNIP1 for binding to HSP90AA1, thereby providing a reciprocal regulatory mechanism for chaperoning of client proteins. Competes with the inhibitory co-chaperone TSC1 for binding to HSP90AA1, thereby providing a reciprocal regulatory mechanism for chaperoning of client proteins. The sequence is that of Activator of 90 kDa heat shock protein ATPase homolog 1 (Ahsa1) from Mus musculus (Mouse).